The primary structure comprises 615 residues: Delta-like protein B (615 aa).

Positions 1–20 (MAHLSLYCLLSVSLLQLVAS) are cleaved as a signal peptide. At 21 to 522 (SGVFELKVHS…VGQTSPSAVA (502 aa)) the chain is on the extracellular side. The region spanning 159–203 (VFCDEFYFGEACSDYCRPRDDTLGHYTCDENGNKECLVGWQGDYC) is the DSL domain. 26 disulfides stabilise this stretch: C161–C170, C174–C186, C194–C203, C208–C219, C212–C225, C227–C236, C245–C250, C258–C267, C274–C286, C280–C296, C298–C307, C314–C325, C319–C334, C336–C345, C352–C363, C357–C373, C375–C384, C391–C402, C396–C411, C413–C422, C429–C440, C434–C449, C451–C460, C467–C478, C472–C487, and C489–C498. EGF-like domains are found at residues 204–237 (SDPI…PSCS), 241–268 (HYPG…LFCN), and 270–308 (DLNY…TNCE). In terms of domain architecture, EGF-like 4; calcium-binding spans 310–346 (EINECDCNPCKNGGSCNDLENDYSCTCPQGFYGKNCE). 2 EGF-like domains span residues 348 to 385 (IAMT…SNCE) and 387 to 423 (RLDR…SRCE). The EGF-like 7; calcium-binding domain occupies 425–461 (NIDDCARYPCQNAGTCQDGINDYTCTCTLGFTGKNCS). An N-linked (GlcNAc...) asparagine glycan is attached at N459. Residues 463–499 (RADACLTNPCLHGGTCFTHFSGPVCQCVPGFMGSTCE) enclose the EGF-like 8 domain. A helical transmembrane segment spans residues 523–543 (VSCVLGVLAVFLGVCVGLVVL). The Cytoplasmic portion of the chain corresponds to 544 to 615 (RRRRHRLRRQ…FLWSAGGGLR (72 aa)).

Post-translationally, ubiquitinated by mib, leading to its endocytosis and subsequent degradation.

It is found in the membrane. Its function is as follows. Acts as a ligand for Notch receptors and is involved in primary neurogenesis. Can activate Notch receptors, thereby playing a key role in lateral inhibition, a process that prevents the immediate neighbors of each nascent neural cell from simultaneously embarking on neural differentiation. This chain is Delta-like protein B (dlb), found in Danio rerio (Zebrafish).